A 361-amino-acid chain; its full sequence is Putative agmatine deiminase (361 aa).

The active-site Amidino-cysteine intermediate is Cys354.

This sequence belongs to the agmatine deiminase family.

The enzyme catalyses agmatine + H2O = N-carbamoylputrescine + NH4(+). This is Putative agmatine deiminase from Streptococcus pneumoniae (strain ATCC BAA-255 / R6).